A 284-amino-acid polypeptide reads, in one-letter code: RNase adapter protein RapZ (284 aa).

ATP is bound at residue 8–15 (GRSGSGKS). A GTP-binding site is contributed by 56–59 (DVRN). The segment at 266–284 (RSRGKNVQSRHRTLEKRKT) is RNA-binding.

The protein belongs to the RapZ-like family. RapZ subfamily. As to quaternary structure, homotrimer.

Functionally, modulates the synthesis of GlmS, by affecting the processing and stability of the regulatory small RNA GlmZ. When glucosamine-6-phosphate (GlcN6P) concentrations are high in the cell, RapZ binds GlmZ and targets it to cleavage by RNase E. Consequently, GlmZ is inactivated and unable to activate GlmS synthesis. Under low GlcN6P concentrations, RapZ is sequestered and inactivated by an other regulatory small RNA, GlmY, preventing GlmZ degradation and leading to synthesis of GlmS. The chain is RNase adapter protein RapZ from Citrobacter koseri (strain ATCC BAA-895 / CDC 4225-83 / SGSC4696).